We begin with the raw amino-acid sequence, 217 residues long: Phosphatase MT3486 (217 aa).

The active-site Nucleophile is Asp9.

The protein belongs to the HAD-like hydrolase superfamily.

Able to hydrolyze geranyl diphosphate (GPP), farnesyl diphosphate (FPP) and geranylgeranyl diphosphate (GGPP) to respectively yield geraniol, farnesol and geranylgeraniol. This is Phosphatase MT3486 from Mycobacterium tuberculosis (strain CDC 1551 / Oshkosh).